Consider the following 288-residue polypeptide: Aminoglycoside N(3)-acetyltransferase VII (288 aa).

The protein belongs to the antibiotic N-acetyltransferase family.

The enzyme catalyses a 2-deoxystreptamine antibiotic + acetyl-CoA = an N(3)-acetyl-2-deoxystreptamine antibiotic + CoA + H(+). In terms of biological role, resistance to paromomycin. The polypeptide is Aminoglycoside N(3)-acetyltransferase VII (aacC7) (Streptomyces paromomycinus (Streptomyces rimosus subsp. paromomycinus)).